Here is a 49-residue protein sequence, read N- to C-terminus: Large ribosomal subunit protein bL33 (49 aa).

The protein belongs to the bacterial ribosomal protein bL33 family.

This Natranaerobius thermophilus (strain ATCC BAA-1301 / DSM 18059 / JW/NM-WN-LF) protein is Large ribosomal subunit protein bL33.